The sequence spans 230 residues: Ribosome-recycling factor, mitochondrial (230 aa).

The N-terminal 24 residues, 1-24 (MILTTARLNCRPVTVPRLFNRSFS), are a transit peptide targeting the mitochondrion.

It belongs to the RRF family.

Its subcellular location is the mitochondrion. In terms of biological role, necessary for protein synthesis in mitochondria. Functions as a ribosome recycling factor in mitochondria. In Saccharomyces cerevisiae (strain ATCC 204508 / S288c) (Baker's yeast), this protein is Ribosome-recycling factor, mitochondrial (RRF1).